The following is a 219-amino-acid chain: Small ribosomal subunit protein uS3c (219 aa).

The KH type-2 domain occupies 39–118 (IRSFIRKYIQ…RLNIVITKVE (80 aa)).

This sequence belongs to the universal ribosomal protein uS3 family. Part of the 30S ribosomal subunit.

Its subcellular location is the plastid. This Cuscuta obtusiflora (Peruvian dodder) protein is Small ribosomal subunit protein uS3c (rps3).